We begin with the raw amino-acid sequence, 478 residues long: MTNQLTTNEGQPWADNQHSQTAGQRGPVLIQDYQLLEKLAHFNRERIPERVVHAKGAGAKGYFKVTKDMSAYTKAAVFSGVGKKTPLITRFSQVAGEAGYPDTYRDVRGFAVKFYTEEGNYDIVGNNTPVFFVNDPLKFPDFIHSQKRDPRTHARSQDMQWDFWSLSPESVHQVTILMSDRGIPASYRMMHGFGSHTFKWVNAQGEQFWVKYHFKTNQGIHNLSNELADELAGKDTDYLQNDLFDAIETGDYPSWTVAVQLVPYEDGLNYPQDIFDVTKVISQKDYPLIEIGQMVLDENPTNNFEDIQELAFSPANLVPGIEASPDKLLQGRLFGYKDAERYRLGANYEQLPVNRPKVPVHNYERDGAMAQNQATGVNYEPNSQDGPTEVPAAKIHGDQLSGTTGNFSADPDYYSAAGKLYRLLSADEQTRLIENIRMNLGQVTKPEIQIREVKQFYQADPEYGRRVATSVKLRFSSV.

The interval 1-23 (MTNQLTTNEGQPWADNQHSQTAG) is disordered. Catalysis depends on residues H53 and N126. Residue Y336 coordinates heme.

Belongs to the catalase family. Heme is required as a cofactor.

The protein localises to the cytoplasm. The enzyme catalyses 2 H2O2 = O2 + 2 H2O. Decomposes hydrogen peroxide into water and oxygen; serves to protect cells from the toxic effects of hydrogen peroxide. This chain is Catalase (katA), found in Latilactobacillus sakei (Lactobacillus sakei).